Here is a 331-residue protein sequence, read N- to C-terminus: Biotin synthase (331 aa).

Residues 52–277 (PDVEVEGIIS…RTMLRFAGGR (226 aa)) enclose the Radical SAM core domain. [4Fe-4S] cluster-binding residues include C67, C71, and C74. Positions 110, 143, 202, and 272 each coordinate [2Fe-2S] cluster.

This sequence belongs to the radical SAM superfamily. Biotin synthase family. In terms of assembly, homodimer. It depends on [4Fe-4S] cluster as a cofactor. Requires [2Fe-2S] cluster as cofactor.

The catalysed reaction is (4R,5S)-dethiobiotin + (sulfur carrier)-SH + 2 reduced [2Fe-2S]-[ferredoxin] + 2 S-adenosyl-L-methionine = (sulfur carrier)-H + biotin + 2 5'-deoxyadenosine + 2 L-methionine + 2 oxidized [2Fe-2S]-[ferredoxin]. It functions in the pathway cofactor biosynthesis; biotin biosynthesis; biotin from 7,8-diaminononanoate: step 2/2. Catalyzes the conversion of dethiobiotin (DTB) to biotin by the insertion of a sulfur atom into dethiobiotin via a radical-based mechanism. The polypeptide is Biotin synthase (Mycobacterium sp. (strain JLS)).